The primary structure comprises 474 residues: Proline--tRNA ligase (474 aa).

It belongs to the class-II aminoacyl-tRNA synthetase family. ProS type 3 subfamily. Homodimer.

The protein localises to the cytoplasm. The catalysed reaction is tRNA(Pro) + L-proline + ATP = L-prolyl-tRNA(Pro) + AMP + diphosphate. Its function is as follows. Catalyzes the attachment of proline to tRNA(Pro) in a two-step reaction: proline is first activated by ATP to form Pro-AMP and then transferred to the acceptor end of tRNA(Pro). The polypeptide is Proline--tRNA ligase (Mycoplasma mycoides subsp. mycoides SC (strain CCUG 32753 / NCTC 10114 / PG1)).